A 557-amino-acid polypeptide reads, in one-letter code: Potassium-transporting ATPase potassium-binding subunit (557 aa).

A run of 12 helical transmembrane segments spans residues 5-25 (GFLL…PLGS), 63-83 (LCAI…MLLG), 132-152 (GLTV…FAFI), 170-190 (LLRI…LFLI), 253-273 (FVQM…FGEV), 283-303 (LLWA…WAEV), 329-349 (VLVS…AVIA), 356-376 (ALGG…FGGV), 379-399 (GLYG…LMIG), 416-436 (LTAL…ALAM), 484-504 (LLAF…MAIA), and 526-546 (LFVG…FIPA).

This sequence belongs to the KdpA family. The system is composed of three essential subunits: KdpA, KdpB and KdpC.

It localises to the cell inner membrane. Its function is as follows. Part of the high-affinity ATP-driven potassium transport (or Kdp) system, which catalyzes the hydrolysis of ATP coupled with the electrogenic transport of potassium into the cytoplasm. This subunit binds the periplasmic potassium ions and delivers the ions to the membrane domain of KdpB through an intramembrane tunnel. In Shigella boydii serotype 18 (strain CDC 3083-94 / BS512), this protein is Potassium-transporting ATPase potassium-binding subunit.